The primary structure comprises 1226 residues: Methionine synthase (1226 aa).

The Hcy-binding domain occupies 7–327 (KVQIEKQLSE…EHIRQMALVV (321 aa)). Residues cysteine 249, cysteine 312, and cysteine 313 each contribute to the Zn(2+) site. The Pterin-binding domain maps to 358-619 (FINVGERTNV…VPEDLREAVE (262 aa)). The B12-binding N-terminal domain maps to 652–746 (SALEWRDWPV…FINASKEVGA (95 aa)). Methylcob(III)alamin is bound by residues glutamate 696, 758–762 (GDVHD), histidine 761, serine 806, threonine 810, and alanine 862. Residues 748-883 (NGKILLATVK…SNELKPSFVE (136 aa)) form the B12-binding domain. The region spanning 899–1226 (KQPRTKPVTL…AEKWLGPNLN (328 aa)) is the AdoMet activation domain. Residues aspartate 949, arginine 1137, and 1192–1193 (YF) contribute to the S-adenosyl-L-methionine site.

The protein belongs to the vitamin-B12 dependent methionine synthase family. Methylcob(III)alamin is required as a cofactor. It depends on Zn(2+) as a cofactor.

The enzyme catalyses (6S)-5-methyl-5,6,7,8-tetrahydrofolate + L-homocysteine = (6S)-5,6,7,8-tetrahydrofolate + L-methionine. The protein operates within amino-acid biosynthesis; L-methionine biosynthesis via de novo pathway; L-methionine from L-homocysteine (MetH route): step 1/1. Functionally, catalyzes the transfer of a methyl group from methyl-cobalamin to homocysteine, yielding enzyme-bound cob(I)alamin and methionine. Subsequently, remethylates the cofactor using methyltetrahydrofolate. The protein is Methionine synthase (metH) of Aliivibrio fischeri (Vibrio fischeri).